We begin with the raw amino-acid sequence, 1779 residues long: Fibronectin type III domain-containing protein 1 (1779 aa).

A signal peptide spans 1–29; sequence MAPEARASPRLLLRAALLLLAALLPVASS. Fibronectin type-III domains lie at 33 to 126, 103 to 203, 207 to 302, and 307 to 402; these read PVDH…KAPR, PNKP…AEED, VPED…TPES, and APEN…IPTT. A compositionally biased stretch (polar residues) spans 400–413; the sequence is PTTSSTEASVQPNG. Disordered stretches follow at residues 400 to 442, 459 to 1108, 1120 to 1227, and 1330 to 1401; these read PTTS…MPPA, NGVA…RNLD, EENT…KPNG, and PTTT…PPGT. Low complexity predominate over residues 423–437; that stretch reads QQPSSSAPKVAASSQ. Positions 493–506 are enriched in polar residues; the sequence is NPRSSRLETLNQKQ. The segment covering 534 to 554 has biased composition (basic and acidic residues); sequence SRKEGMDRRGPSLDPHPHPRV. 2 stretches are compositionally biased toward polar residues: residues 557–570 and 590–607; these read SASSAYHQLSSTDN and SSGSSPKNPGRSRPTSAP. Residues 629 to 640 show a composition bias toward low complexity; sequence ASSSTSRQSHSS. Serine 651 is subject to Phosphoserine. Residues 676–694 are compositionally biased toward low complexity; the sequence is HASSSHTTSRTASSSHPSA. Serine 699 is subject to Phosphoserine. Residues 707 to 720 show a composition bias toward basic and acidic residues; sequence DSDRAAEDTIRRAE. 2 stretches are compositionally biased toward polar residues: residues 763–784 and 861–875; these read PSVSPQSTSASKVLTRSPSLPA and PLSSKAQGFQQSTTD. The segment covering 879–904 has biased composition (low complexity); the sequence is PQTSPASTSRQPSPARPPASRSQPSP. Polar residues-rich tracts occupy residues 957–971 and 1003–1020; these read APQNQNEGAQSTYED and VGSQSWSSDNRPQPSQAG. The segment covering 1085-1097 has biased composition (low complexity); that stretch reads LSTSVKKWPSSSS. The span at 1098–1108 shows a compositional bias: basic and acidic residues; that stretch reads PRDKYADRNLD. Composition is skewed to polar residues over residues 1147–1159 and 1166–1177; these read NPATASPIANTHS and RAPSSYSSTTPM. Positions 1330-1389 are enriched in low complexity; the sequence is PTTTMPPSTTTTTVPPTTTLPPTTTTTRRTTTTRRTTTTRRPTTTTRATRRTTTTTTTPE. The Fibronectin type-III 5 domain maps to 1543–1637; that stretch reads APRNITVVAM…PSVSFVTESD (95 aa). Asparagine 1546 is a glycosylation site (N-linked (GlcNAc...) asparagine).

The protein resides in the secreted. Functionally, may be an activator of G protein signaling. In Rattus norvegicus (Rat), this protein is Fibronectin type III domain-containing protein 1 (Fndc1).